Reading from the N-terminus, the 1032-residue chain is Connector enhancer of kinase suppressor of ras 2 (1032 aa).

One can recognise an SAM domain in the interval 11-76 (WSPSQVVDWM…LEAVDLLCAL (66 aa)). Residue Ser12 is modified to Phosphoserine. The 95-residue stretch at 84 to 178 (NLKTLSHKLN…TIVQQDCTVY (95 aa)) folds into the CRIC domain. In terms of domain architecture, PDZ spans 215-297 (VIQLANIKPS…GVILTLKKRP (83 aa)). Residues 302 to 515 (TSAPALLKNM…PAHYSLLPSL (214 aa)) form the DUF1170 domain. Residues 324 to 340 (RSPTSSVATPSSTISTP) are compositionally biased toward low complexity. The interval 324-349 (RSPTSSVATPSSTISTPTKRDSSALQ) is disordered. Phosphoserine occurs at positions 338 and 390. Disordered stretches follow at residues 480-509 (EEYM…PAHY) and 538-558 (FQQS…ISGK). The span at 545-558 (HKSKKKNKGAISGK) shows a compositional bias: basic residues. Positions 570 to 669 (RGDCEGWLWK…WLNRINMLTA (100 aa)) constitute a PH domain. Residues 682-766 (DYWSESDKEE…PIRKTASQRR (85 aa)) form a disordered region. Tyr683 is modified (phosphotyrosine). Residues 683 to 693 (YWSESDKEEAD) show a composition bias toward acidic residues. Ser685 and Ser687 each carry phosphoserine. A compositionally biased stretch (pro residues) spans 701–714 (DSPPPPYDTYPRPP). A compositionally biased stretch (low complexity) spans 730–740 (LSSTETSQSQS). Ser756 and Ser767 each carry phosphoserine. The segment at 864–900 (ACDPQDDIQPPEVEEEEEEEEEEAAGENVGEKNENRE) is disordered. Residues 874-917 (PEVEEEEEEEEEEAAGENVGEKNENREEKLGDSLQDLYRALEEA) adopt a coiled-coil conformation. Residues 875 to 888 (EVEEEEEEEEEEAA) show a composition bias toward acidic residues. A Phosphoserine modification is found at Ser906.

It belongs to the CNKSR family. As to quaternary structure, interacts with RAF1, RAB2L and RAL GTPase proteins. Post-translationally, phosphorylated on tyrosine.

Its subcellular location is the cytoplasm. The protein localises to the membrane. Functionally, may function as an adapter protein or regulator of Ras signaling pathways. This is Connector enhancer of kinase suppressor of ras 2 (Cnksr2) from Mus musculus (Mouse).